Consider the following 120-residue polypeptide: Glycine cleavage system H protein (120 aa).

The 83-residue stretch at 17–99 (VATVGITEHA…QGAAWFFKLK (83 aa)) folds into the Lipoyl-binding domain. Lysine 58 carries the post-translational modification N6-lipoyllysine.

The protein belongs to the GcvH family. In terms of assembly, the glycine cleavage system is composed of four proteins: P, T, L and H. (R)-lipoate serves as cofactor.

Its function is as follows. The glycine cleavage system catalyzes the degradation of glycine. The H protein shuttles the methylamine group of glycine from the P protein to the T protein. In Sinorhizobium medicae (strain WSM419) (Ensifer medicae), this protein is Glycine cleavage system H protein.